Consider the following 270-residue polypeptide: MNFGKKVWLIGNSSEKSKKTLNKLSKILKAEHFVFDDINPEIVISVGGDGTLLRAMHMYEYQLDRVRFLGVHTGHLGFYTDFTDEDLFEVVEALYDENPAQAIHYPLIRVQVSFTDGYQIVRHVLNEATIRRASKTMVGDVRISDYLFERFRGDGLSISTPTGSTAYNKSIGGAVVHPRVKAMQVAEIASLNNVVYRTLGSPMIVAEKDTITVCPAPEDDYSLTFDQLTFEYKNIKSIEFSLDGTTISFANCAHTPFWERVSKSFIGEVE.

Asp49 acts as the Proton acceptor in catalysis. NAD(+) is bound by residues Asp49 to Gly50, Arg54, Asn126 to Glu127, Arg152, Asp154, Thr165 to Ser170, Ala189, and Gln227.

The protein belongs to the NAD kinase family. It depends on a divalent metal cation as a cofactor.

The protein resides in the cytoplasm. It carries out the reaction NAD(+) + ATP = ADP + NADP(+) + H(+). Its function is as follows. Involved in the regulation of the intracellular balance of NAD and NADP, and is a key enzyme in the biosynthesis of NADP. Catalyzes specifically the phosphorylation on 2'-hydroxyl of the adenosine moiety of NAD to yield NADP. This Lactococcus lactis subsp. lactis (strain IL1403) (Streptococcus lactis) protein is NAD kinase.